The primary structure comprises 297 residues: Probable oxidoreductase (297 aa).

9–33 (VVTGGASGLGAETVRALAAAGAEVT) serves as a coordination point for NAD(+). Substrate is bound at residue S138. Y164 serves as the catalytic Proton acceptor.

The protein belongs to the short-chain dehydrogenases/reductases (SDR) family.

In Streptomyces lividans, this protein is Probable oxidoreductase.